The sequence spans 249 residues: General transcription factor IIF subunit 2 (249 aa).

An N-acetylalanine modification is found at Ala2. Residues Lys22, Lys33, and Lys137 each carry the N6-acetyllysine modification. Ser142 bears the Phosphoserine mark. Gly227 and His229 together coordinate DNA. Phosphoserine is present on Ser248.

This sequence belongs to the TFIIF beta subunit family. Heterodimer of an alpha and a beta subunit. Interacts with HTATSF1 and URI1. Interacts with GPBP1. Interacts with GTF2B (via N-terminus); this interaction is inhibited in presence of GTF2F1. Part of TBP-based Pol II pre-initiation complex (PIC), in which Pol II core assembles with general transcription factors and other specific initiation factors including GTF2E1, GTF2E2, GTF2F1, GTF2F2, TCEA1, ERCC2, ERCC3, GTF2H2, GTF2H3, GTF2H4, GTF2H5, GTF2A1, GTF2A2, GTF2B and TBP; this large multi-subunit PIC complex mediates DNA unwinding and targets Pol II core to the transcription start site where the first phosphodiester bond forms.

It localises to the nucleus. In terms of biological role, TFIIF is a general transcription initiation factor that binds to RNA polymerase II and helps to recruit it to the initiation complex in collaboration with TFIIB. This Mus musculus (Mouse) protein is General transcription factor IIF subunit 2 (Gtf2f2).